The primary structure comprises 240 residues: LOB domain-containing protein 39 (240 aa).

One can recognise an LOB domain in the interval 1–107; it reads MSCNGCRVLR…VETVLRGGTL (107 aa). The disordered stretch occupies residues 200-233; that stretch reads GDRPGSPSEESVTTSCWENGMRGDNKQKRNKGEK. The segment covering 207 to 216 has biased composition (polar residues); sequence SEESVTTSCW.

Belongs to the LOB domain-containing protein family. As to expression, expressed in young shoots, roots, stems, leaves and flowers.

This chain is LOB domain-containing protein 39 (LBD39), found in Arabidopsis thaliana (Mouse-ear cress).